The sequence spans 305 residues: Aspartate carbamoyltransferase catalytic subunit (305 aa).

Carbamoyl phosphate is bound by residues Arg-51 and Thr-52. Lys-79 contributes to the L-aspartate binding site. 3 residues coordinate carbamoyl phosphate: Arg-101, His-129, and Gln-132. Residues Arg-165 and Arg-220 each contribute to the L-aspartate site. Gly-258 and Pro-259 together coordinate carbamoyl phosphate.

The protein belongs to the aspartate/ornithine carbamoyltransferase superfamily. ATCase family. As to quaternary structure, heterododecamer (2C3:3R2) of six catalytic PyrB chains organized as two trimers (C3), and six regulatory PyrI chains organized as three dimers (R2).

It catalyses the reaction carbamoyl phosphate + L-aspartate = N-carbamoyl-L-aspartate + phosphate + H(+). It functions in the pathway pyrimidine metabolism; UMP biosynthesis via de novo pathway; (S)-dihydroorotate from bicarbonate: step 2/3. Catalyzes the condensation of carbamoyl phosphate and aspartate to form carbamoyl aspartate and inorganic phosphate, the committed step in the de novo pyrimidine nucleotide biosynthesis pathway. In Rubrobacter xylanophilus (strain DSM 9941 / JCM 11954 / NBRC 16129 / PRD-1), this protein is Aspartate carbamoyltransferase catalytic subunit.